The primary structure comprises 205 residues: Holliday junction branch migration complex subunit RuvA (205 aa).

Residues 1–64 (MIGRLNGILV…EDAQLLFGFN (64 aa)) form a domain I region. Residues 65-143 (NKVERALFRE…NWGNDLFTPF (79 aa)) form a domain II region. The flexible linker stretch occupies residues 144–156 (SDSAVIEPFSDAT). A domain III region spans residues 157 to 205 (IANNAADDAVSALVSLGYKLPQAQKAVKSVSKPDMSTEVLIKESLKSML).

Belongs to the RuvA family. As to quaternary structure, homotetramer. Forms an RuvA(8)-RuvB(12)-Holliday junction (HJ) complex. HJ DNA is sandwiched between 2 RuvA tetramers; dsDNA enters through RuvA and exits via RuvB. An RuvB hexamer assembles on each DNA strand where it exits the tetramer. Each RuvB hexamer is contacted by two RuvA subunits (via domain III) on 2 adjacent RuvB subunits; this complex drives branch migration. In the full resolvosome a probable DNA-RuvA(4)-RuvB(12)-RuvC(2) complex forms which resolves the HJ.

The protein resides in the cytoplasm. The RuvA-RuvB-RuvC complex processes Holliday junction (HJ) DNA during genetic recombination and DNA repair, while the RuvA-RuvB complex plays an important role in the rescue of blocked DNA replication forks via replication fork reversal (RFR). RuvA specifically binds to HJ cruciform DNA, conferring on it an open structure. The RuvB hexamer acts as an ATP-dependent pump, pulling dsDNA into and through the RuvAB complex. HJ branch migration allows RuvC to scan DNA until it finds its consensus sequence, where it cleaves and resolves the cruciform DNA. This is Holliday junction branch migration complex subunit RuvA from Pseudoalteromonas translucida (strain TAC 125).